Here is a 554-residue protein sequence, read N- to C-terminus: Hydroxylamine reductase (554 aa).

4 residues coordinate [2Fe-2S] cluster: cysteine 3, cysteine 6, cysteine 18, and cysteine 25. Hybrid [4Fe-2O-2S] cluster-binding residues include histidine 252, glutamate 276, cysteine 320, cysteine 408, cysteine 436, cysteine 461, glutamate 495, and lysine 497. Cysteine 408 carries the cysteine persulfide modification.

It belongs to the HCP family. Requires [2Fe-2S] cluster as cofactor. Hybrid [4Fe-2O-2S] cluster is required as a cofactor.

The protein localises to the cytoplasm. The catalysed reaction is A + NH4(+) + H2O = hydroxylamine + AH2 + H(+). Its function is as follows. Catalyzes the reduction of hydroxylamine to form NH(3) and H(2)O. The protein is Hydroxylamine reductase of Shewanella sp. (strain MR-7).